A 404-amino-acid polypeptide reads, in one-letter code: Phosphoglycerate kinase (404 aa).

Substrate contacts are provided by residues 22-24 (DFN), arginine 37, 60-63 (HLGR), arginine 120, and arginine 160. ATP-binding positions include lysine 215, glutamate 333, and 360-363 (GGDS).

Belongs to the phosphoglycerate kinase family. Monomer.

The protein localises to the cytoplasm. The enzyme catalyses (2R)-3-phosphoglycerate + ATP = (2R)-3-phospho-glyceroyl phosphate + ADP. It functions in the pathway carbohydrate degradation; glycolysis; pyruvate from D-glyceraldehyde 3-phosphate: step 2/5. The chain is Phosphoglycerate kinase from Latilactobacillus sakei subsp. sakei (strain 23K) (Lactobacillus sakei subsp. sakei).